A 175-amino-acid chain; its full sequence is Large ribosomal subunit protein mL67 (175 aa).

It belongs to the mitochondrion-specific ribosomal protein mL67 family. In terms of assembly, component of the mitochondrial large ribosomal subunit (mt-LSU). Mature yeast 74S mitochondrial ribosomes consist of a small (37S) and a large (54S) subunit. The 37S small subunit contains a 15S ribosomal RNA (15S mt-rRNA) and at least 32 different proteins. The 54S large subunit contains a 21S rRNA (21S mt-rRNA) and at least 45 different proteins.

It localises to the mitochondrion. Its function is as follows. Component of the mitochondrial ribosome (mitoribosome), a dedicated translation machinery responsible for the synthesis of mitochondrial genome-encoded proteins, including at least some of the essential transmembrane subunits of the mitochondrial respiratory chain. The mitoribosomes are attached to the mitochondrial inner membrane and translation products are cotranslationally integrated into the membrane. mL67/mhr1 also has extraribosomal functions, being involved in regulation of mitochondrial DNA recombination, maintenance and repair, and generation of homoplasmic cells. mL67/mhr1 also acts as transcription factor involved in regulation of RNA polymerase II-dependent transcription. This is Large ribosomal subunit protein mL67 (mhr1) from Schizosaccharomyces pombe (strain 972 / ATCC 24843) (Fission yeast).